Here is a 226-residue protein sequence, read N- to C-terminus: V-type proton ATPase subunit E (226 aa).

It belongs to the V-ATPase E subunit family. V-ATPase is a heteromultimeric enzyme composed of a peripheral catalytic V1 complex (components A to H) attached to an integral membrane V0 proton pore complex (components: a, c, c', c'', d, e, f and VOA1).

The protein resides in the vacuole membrane. In terms of biological role, subunit of the V1 complex of vacuolar(H+)-ATPase (V-ATPase), a multisubunit enzyme composed of a peripheral complex (V1) that hydrolyzes ATP and a membrane integral complex (V0) that translocates protons. V-ATPase is responsible for acidifying and maintaining the pH of intracellular compartments. The chain is V-type proton ATPase subunit E (VMA4) from Candida albicans (Yeast).